Consider the following 571-residue polypeptide: Potassium-transporting ATPase potassium-binding subunit (571 aa).

The next 12 helical transmembrane spans lie at 5–25 (LAAG…YVPV), 60–80 (YGYA…LYAL), 86–106 (VLPL…NTAV), 131–151 (GLAV…VALI), 177–197 (ILLP…VIQS), 247–267 (PTPV…VSLT), 291–311 (LTLL…TLAA), 334–354 (FGIP…TGAV), 386–406 (GLYG…LLVG), 425–445 (ALSV…TVIL), 498–518 (ALGL…LALA), and 547–567 (GTVV…GPIA).

It belongs to the KdpA family. As to quaternary structure, the system is composed of three essential subunits: KdpA, KdpB and KdpC.

The protein resides in the cell membrane. Part of the high-affinity ATP-driven potassium transport (or Kdp) system, which catalyzes the hydrolysis of ATP coupled with the electrogenic transport of potassium into the cytoplasm. This subunit binds the extracellular potassium ions and delivers the ions to the membrane domain of KdpB through an intramembrane tunnel. The sequence is that of Potassium-transporting ATPase potassium-binding subunit from Rhodococcus jostii (strain RHA1).